The primary structure comprises 122 residues: MSKLSRKQQTQKRHRRLRRHITGTSNRPRLAVFRSNNHIYAQLIDDAAQSTLCSASTVDKELRSGLKNNAGSCDASVAVGALVAKRAIAKGIEQVVFDRGGNLYHGRIKALADAAREAGLQF.

Positions 1 to 21 are enriched in basic residues; the sequence is MSKLSRKQQTQKRHRRLRRHI. The interval 1–25 is disordered; it reads MSKLSRKQQTQKRHRRLRRHITGTS.

This sequence belongs to the universal ribosomal protein uL18 family. In terms of assembly, part of the 50S ribosomal subunit; part of the 5S rRNA/L5/L18/L25 subcomplex. Contacts the 5S and 23S rRNAs.

Functionally, this is one of the proteins that bind and probably mediate the attachment of the 5S RNA into the large ribosomal subunit, where it forms part of the central protuberance. This is Large ribosomal subunit protein uL18 from Synechococcus sp. (strain CC9902).